A 739-amino-acid chain; its full sequence is MPNMEPTTKEIKEQKIYQEMGLTDSEYELVCSILGREPNYTETGLFSVMWSEHCSYKNSKPVLRKFPTEGKQVLQGPGEGAGIVDIGDGLGVAFKVESHNHPSYVEPYQGAATGVGGIIRDVFSMGARPIAMLNSLRFGELDTPHAKYLVSEVVAGIAGYGNSIGIPTVGGEIQFDPCYTKNPLVNAMCVGLIEAKDIQKGQAKGIGNPVMYVGAKTGRDGIHGATFASVEFSEEGEQQRSAVQVGDPFMEKLLLEACLDVIRDHSDILVGIQDMGAAGLVSSSSEMASKAGAGLELIMDDVPQRELNMTPYEMLLSESQERMLLCVKKGHVEEIQALFERYGLEAVVIGQVTDDKMYKIIHHGEVVANVPVDALAEDAPVYHKPSKEPARYQAFQEEESFVPVMEDVVGVWKELLAQPTIASKRHIYEQYDYQVRTDTAVVPGSDAAIVRVRGTEKAIAMTTDCNSRYLYLDPKVGGAIAVAEAARNIVCSGGKPLAITDGLNFGNPEKPEIFWEIEKAADGISAACLELDTPVISGNVSLYNETDGTGIYPTPVIGMVGLVEDLAHITTQDFKNSGDVIFLIGETKAEYSGSELQKLQQGKISGRAPELDLTTEKKYQQLLLTAIQEGLVASSHDLAEGGFGVALAEATFKAGLGADVEVPFELNQLFSESQSRFLVSVKPENEAAFAQLMELEKVYRLGVVTEDDTIRVKHKEDQVTAKTTELRSIWQGAIPCLLK.

His53 is a catalytic residue. Residues Tyr56 and Lys95 each coordinate ATP. Glu97 contributes to the Mg(2+) binding site. Residues 98 to 101 and Arg120 each bind substrate; that span reads SHNH. His99 (proton acceptor) is an active-site residue. Asp121 contributes to the Mg(2+) binding site. Gln244 contacts substrate. Asp274 is a binding site for Mg(2+). A substrate-binding site is contributed by 318 to 320; the sequence is ESQ. 2 residues coordinate ATP: Asp501 and Gly538. Asn539 contributes to the Mg(2+) binding site. Ser541 provides a ligand contact to substrate.

It belongs to the FGAMS family. In terms of assembly, monomer. Part of the FGAM synthase complex composed of 1 PurL, 1 PurQ and 2 PurS subunits.

The protein resides in the cytoplasm. The catalysed reaction is N(2)-formyl-N(1)-(5-phospho-beta-D-ribosyl)glycinamide + L-glutamine + ATP + H2O = 2-formamido-N(1)-(5-O-phospho-beta-D-ribosyl)acetamidine + L-glutamate + ADP + phosphate + H(+). The protein operates within purine metabolism; IMP biosynthesis via de novo pathway; 5-amino-1-(5-phospho-D-ribosyl)imidazole from N(2)-formyl-N(1)-(5-phospho-D-ribosyl)glycinamide: step 1/2. Its function is as follows. Part of the phosphoribosylformylglycinamidine synthase complex involved in the purines biosynthetic pathway. Catalyzes the ATP-dependent conversion of formylglycinamide ribonucleotide (FGAR) and glutamine to yield formylglycinamidine ribonucleotide (FGAM) and glutamate. The FGAM synthase complex is composed of three subunits. PurQ produces an ammonia molecule by converting glutamine to glutamate. PurL transfers the ammonia molecule to FGAR to form FGAM in an ATP-dependent manner. PurS interacts with PurQ and PurL and is thought to assist in the transfer of the ammonia molecule from PurQ to PurL. This chain is Phosphoribosylformylglycinamidine synthase subunit PurL, found in Listeria monocytogenes serotype 4b (strain F2365).